The following is a 266-amino-acid chain: GTP cyclohydrolase FolE2 (266 aa).

This sequence belongs to the GTP cyclohydrolase IV family.

The enzyme catalyses GTP + H2O = 7,8-dihydroneopterin 3'-triphosphate + formate + H(+). The protein operates within cofactor biosynthesis; 7,8-dihydroneopterin triphosphate biosynthesis; 7,8-dihydroneopterin triphosphate from GTP: step 1/1. Converts GTP to 7,8-dihydroneopterin triphosphate. This is GTP cyclohydrolase FolE2 from Syntrophotalea carbinolica (strain DSM 2380 / NBRC 103641 / GraBd1) (Pelobacter carbinolicus).